The following is a 397-amino-acid chain: Gastric triacylglycerol lipase (397 aa).

Positions 1–19 (MWWLLVTVCFIHMSGNAFC) are cleaved as a signal peptide. Residue asparagine 33 is glycosylated (N-linked (GlcNAc...) asparagine). The AB hydrolase-1 domain occupies 77–376 (PVVFLQHGLL…PNYNHLDFIW (300 aa)). Serine 171 (nucleophile) is an active-site residue. A disulfide bridge connects residues cysteine 245 and cysteine 254. 2 N-linked (GlcNAc...) asparagine glycosylation sites follow: asparagine 270 and asparagine 326. Active-site charge relay system residues include aspartate 342 and histidine 371.

Belongs to the AB hydrolase superfamily. Lipase family.

It is found in the secreted. It carries out the reaction a triacylglycerol + H2O = a diacylglycerol + a fatty acid + H(+). The enzyme catalyses 1,2,3-tri-(9Z-octadecenoyl)-glycerol + H2O = 1,2-di-(9Z-octadecenoyl)-sn-glycerol + (9Z)-octadecenoate + H(+). It catalyses the reaction 1,2,3-trioctanoylglycerol + H2O = 1,2-dioctanoyl-sn-glycerol + octanoate + H(+). With respect to regulation, inhibited by diethylp-nitrophenyl phosphate but not inhibited by thiol reagents 5,5'-dithiobis(2-nitrobenzoic acid) or 4,4'-dithiopyridine. Functionally, catalyzes the hydrolysis of triacylglycerols to yield free fatty acids, diacylglycerol, monoacylglycerol, and glycerol. Shows a preferential hydrolysis at the sn-3 position of triacylglycerol. This chain is Gastric triacylglycerol lipase (LIPF), found in Bos taurus (Bovine).